A 478-amino-acid chain; its full sequence is Protein nucleotidyltransferase YdiU (478 aa).

The ATP site is built by Gly-84, Gly-86, Arg-87, Lys-107, Asp-119, Gly-120, Arg-170, and Arg-177. The active-site Proton acceptor is Asp-246. 2 residues coordinate Mg(2+): Asn-247 and Asp-256. ATP is bound at residue Asp-256.

Belongs to the SELO family. The cofactor is Mg(2+). Requires Mn(2+) as cofactor.

The enzyme catalyses L-seryl-[protein] + ATP = 3-O-(5'-adenylyl)-L-seryl-[protein] + diphosphate. It carries out the reaction L-threonyl-[protein] + ATP = 3-O-(5'-adenylyl)-L-threonyl-[protein] + diphosphate. It catalyses the reaction L-tyrosyl-[protein] + ATP = O-(5'-adenylyl)-L-tyrosyl-[protein] + diphosphate. The catalysed reaction is L-histidyl-[protein] + UTP = N(tele)-(5'-uridylyl)-L-histidyl-[protein] + diphosphate. The enzyme catalyses L-seryl-[protein] + UTP = O-(5'-uridylyl)-L-seryl-[protein] + diphosphate. It carries out the reaction L-tyrosyl-[protein] + UTP = O-(5'-uridylyl)-L-tyrosyl-[protein] + diphosphate. Functionally, nucleotidyltransferase involved in the post-translational modification of proteins. It can catalyze the addition of adenosine monophosphate (AMP) or uridine monophosphate (UMP) to a protein, resulting in modifications known as AMPylation and UMPylation. This is Protein nucleotidyltransferase YdiU from Escherichia coli O9:H4 (strain HS).